The following is a 265-amino-acid chain: NAD kinase (265 aa).

Asp-45 serves as the catalytic Proton acceptor. NAD(+) contacts are provided by residues 45-46 (DG), 121-122 (NE), Arg-147, Asp-149, Ala-184, and Gln-221.

This sequence belongs to the NAD kinase family. A divalent metal cation is required as a cofactor.

The protein localises to the cytoplasm. It catalyses the reaction NAD(+) + ATP = ADP + NADP(+) + H(+). Involved in the regulation of the intracellular balance of NAD and NADP, and is a key enzyme in the biosynthesis of NADP. Catalyzes specifically the phosphorylation on 2'-hydroxyl of the adenosine moiety of NAD to yield NADP. The polypeptide is NAD kinase (Leuconostoc citreum (strain KM20)).